The chain runs to 278 residues: Protein NIF3 homolog (278 aa).

Belongs to the GTP cyclohydrolase I type 2/NIF3 family.

This chain is Protein NIF3 homolog, found in Schizosaccharomyces pombe (strain 972 / ATCC 24843) (Fission yeast).